A 274-amino-acid chain; its full sequence is 2,3,4,5-tetrahydropyridine-2,6-dicarboxylate N-succinyltransferase (274 aa).

Residues arginine 104 and aspartate 141 each contribute to the substrate site.

The protein belongs to the transferase hexapeptide repeat family. As to quaternary structure, homotrimer.

It localises to the cytoplasm. It catalyses the reaction (S)-2,3,4,5-tetrahydrodipicolinate + succinyl-CoA + H2O = (S)-2-succinylamino-6-oxoheptanedioate + CoA. Its pathway is amino-acid biosynthesis; L-lysine biosynthesis via DAP pathway; LL-2,6-diaminopimelate from (S)-tetrahydrodipicolinate (succinylase route): step 1/3. The polypeptide is 2,3,4,5-tetrahydropyridine-2,6-dicarboxylate N-succinyltransferase (Escherichia coli O139:H28 (strain E24377A / ETEC)).